The primary structure comprises 31 residues: Photosystem II reaction center protein T (31 aa).

A helical membrane pass occupies residues 3–23 (SFAYVLILTFAIATLFFAIAF).

It belongs to the PsbT family. PSII is composed of 1 copy each of membrane proteins PsbA, PsbB, PsbC, PsbD, PsbE, PsbF, PsbH, PsbI, PsbJ, PsbK, PsbL, PsbM, PsbT, PsbX, PsbY, PsbZ, Psb30/Ycf12, peripheral proteins PsbO, CyanoQ (PsbQ), PsbU, PsbV and a large number of cofactors. It forms dimeric complexes.

Its subcellular location is the cellular thylakoid membrane. Its function is as follows. Found at the monomer-monomer interface of the photosystem II (PS II) dimer, plays a role in assembly and dimerization of PSII. PSII is a light-driven water plastoquinone oxidoreductase, using light energy to abstract electrons from H(2)O, generating a proton gradient subsequently used for ATP formation. This is Photosystem II reaction center protein T from Synechococcus sp. (strain CC9902).